The chain runs to 536 residues: uncharacterized protein (536 aa).

The SWIM-type zinc finger occupies 71-98 (LFVIVKSGCSCPSGRICRHMLAVFLYVY). Positions 482-528 (YKEAARYLKKLRTLYKKAKKQKVWERYIQLLSSHYKRLRALQEELQK) form a coiled coil.

This is an uncharacterized protein from Bacillus subtilis (strain 168).